A 38-amino-acid chain; its full sequence is Alpha-conotoxin LvIC (38 aa).

A propeptide spanning residues 1–21 (SNGRNAAAGDKPSYWITLAIT) is cleaved from the precursor. Disulfide bonds link C23–C29 and C24–C34. Residue Q35 is modified to Glutamine amide.

The protein belongs to the conotoxin A superfamily. In terms of processing, the two analogs ([DelQ14]LvIC and [D1G,DelQ14]LvIC) are amidated at their N-terminal Cys. As to expression, expressed by the venom gland.

Its subcellular location is the secreted. Functionally, alpha-conotoxins bind to the nicotinic acetylcholine receptors (nAChR) and inhibit them. This synthetic peptide inhibits rat alpha-6/alpha-3-beta-4 nAChR (IC(50)=3.3 uM). The chain is Alpha-conotoxin LvIC from Conus lividus (Livid cone).